Reading from the N-terminus, the 173-residue chain is Lipoprotein signal peptidase (173 aa).

The next 4 helical transmembrane spans lie at 14 to 34 (LAWLWLTVLIVAVDQVSKYYF), 44 to 64 (IIVIPDYFSWTLAYNTGAAFS), 72 to 92 (WQRWLFALIAVVVSAVLVVWL), and 98 to 118 (DDTWLAIALALVLGGALGNLY). Catalysis depends on residues Asp-128 and Asp-147. The chain crosses the membrane as a helical span at residues 139 to 159 (YFPAFNVADSAITVGAIMLAL).

Belongs to the peptidase A8 family.

The protein resides in the cell inner membrane. The catalysed reaction is Release of signal peptides from bacterial membrane prolipoproteins. Hydrolyzes -Xaa-Yaa-Zaa-|-(S,diacylglyceryl)Cys-, in which Xaa is hydrophobic (preferably Leu), and Yaa (Ala or Ser) and Zaa (Gly or Ala) have small, neutral side chains.. It functions in the pathway protein modification; lipoprotein biosynthesis (signal peptide cleavage). In terms of biological role, this protein specifically catalyzes the removal of signal peptides from prolipoproteins. The protein is Lipoprotein signal peptidase of Pseudomonas syringae pv. tomato (strain ATCC BAA-871 / DC3000).